Consider the following 346-residue polypeptide: MALRYVVHDEISGFDQLKPEEYEVPQKLNPGEVLVKLKAASLNYRDLIITKGLYPLPLQLPVVPGSDGAGIIEKVGEDVEGFEKGDSVVCNFFTNYLDGTPTDFATHSALGGTRDGCFQKYAVLPAHALVHAPKNLSFEEIATLPCAAVTAWNGLFGSKEHQVKPGNNVLVLGTGGVSTFALQFALAAGANVTVTSSSDEKLEFAKKLGATHTINYKKTPQWASPALKMTNGVGYHHVIEVGGEKTLPQSIACLAKDGMISMIGFVASEGTTPNLTSIIGQILNRNANIRGIFVGSVSMFRDMVACIEAKDIHPVVDKVFPFDQLKEAYEYQWSQAHIGKVVLKID.

It belongs to the zinc-containing alcohol dehydrogenase family. Quinone oxidoreductase subfamily.

It localises to the cytoplasm. This chain is Zinc-type alcohol dehydrogenase-like protein C1773.06c, found in Schizosaccharomyces pombe (strain 972 / ATCC 24843) (Fission yeast).